We begin with the raw amino-acid sequence, 522 residues long: Hydroxymethylglutaryl-CoA synthase, cytoplasmic (522 aa).

Residues D43 and A44 each contribute to the (3S)-3-hydroxy-3-methylglutaryl-CoA site. Residue E95 is the Proton donor/acceptor of the active site. Residues C129, N167, T171, S221, H264, K273, N344, and S378 each coordinate (3S)-3-hydroxy-3-methylglutaryl-CoA. C129 (acyl-thioester intermediate) is an active-site residue. H264 serves as the catalytic Proton donor/acceptor.

This sequence belongs to the thiolase-like superfamily. HMG-CoA synthase family. Homodimer.

It localises to the cytoplasm. It carries out the reaction acetoacetyl-CoA + acetyl-CoA + H2O = (3S)-3-hydroxy-3-methylglutaryl-CoA + CoA + H(+). It functions in the pathway metabolic intermediate biosynthesis; (R)-mevalonate biosynthesis; (R)-mevalonate from acetyl-CoA: step 2/3. Its function is as follows. Catalyzes the condensation of acetyl-CoA with acetoacetyl-CoA to form HMG-CoA, which is converted by HMG-CoA reductase (HMGCR) into mevalonate, a precursor for cholesterol synthesis. This is Hydroxymethylglutaryl-CoA synthase, cytoplasmic (HMGCS1) from Gallus gallus (Chicken).